The sequence spans 329 residues: Quinone oxidoreductase (329 aa).

Position 2 is an N-acetylalanine (alanine 2). Residue lysine 23 is modified to N6-acetyllysine. NADP(+) is bound by residues tyrosine 53, serine 158–valine 161, glycine 181, histidine 200, asparagine 229, valine 246–arginine 249, and valine 269–valine 271. The residue at position 248 (serine 248) is a Phosphoserine. Lysine 296 is modified (N6-succinyllysine).

This sequence belongs to the zinc-containing alcohol dehydrogenase family. Quinone oxidoreductase subfamily. Homotetramer.

It localises to the cytoplasm. The catalysed reaction is 2 a quinone + NADPH + H(+) = 2 a 1,4-benzosemiquinone + NADP(+). Does not have alcohol dehydrogenase activity. Binds NADP and acts through a one-electron transfer process. Orthoquinones, such as 1,2-naphthoquinone or 9,10-phenanthrenequinone, are the best substrates (in vitro). May act in the detoxification of xenobiotics. Interacts with (AU)-rich elements (ARE) in the 3'-UTR of target mRNA species and enhances their stability. NADPH binding interferes with mRNA binding. This is Quinone oxidoreductase (CRYZ) from Pongo abelii (Sumatran orangutan).